Here is a 271-residue protein sequence, read N- to C-terminus: MKLVFYGAGNMAQAIFTGIINSNNLNANDIYLTNKSNEQALKSFAEKLGVNYSYDDEALLKDADYVFLGTKPHDFENLANRIREHITNDNRFISIMAGLSIDYIRQQLNTNNPLARIMPNTNAQVGHSVTGISFSNNFDPKSKNEVDELINAFGSVIEVSEEHLHQVTAITGSGPAFLYHVFEQYVKAGTELGLERNQVEESIRNLIIGTSKMIERSDLSMSQLRKNITSKGGTTQAGLDALSQYDIVSMFEDCLGAAVNRSMELSHKEDE.

This sequence belongs to the pyrroline-5-carboxylate reductase family.

The protein resides in the cytoplasm. It catalyses the reaction L-proline + NADP(+) = (S)-1-pyrroline-5-carboxylate + NADPH + 2 H(+). The enzyme catalyses L-proline + NAD(+) = (S)-1-pyrroline-5-carboxylate + NADH + 2 H(+). It participates in amino-acid biosynthesis; L-proline biosynthesis; L-proline from L-glutamate 5-semialdehyde: step 1/1. Its function is as follows. Catalyzes the reduction of 1-pyrroline-5-carboxylate (PCA) to L-proline. The polypeptide is Pyrroline-5-carboxylate reductase (Staphylococcus epidermidis (strain ATCC 35984 / DSM 28319 / BCRC 17069 / CCUG 31568 / BM 3577 / RP62A)).